Here is a 117-residue protein sequence, read N- to C-terminus: Zinc metalloproteinase/disintegrin (117 aa).

One can recognise a Disintegrin domain in the interval 36–117; the sequence is TPVSGNELLE…AGCPRNPFHA (82 aa). 6 cysteine pairs are disulfide-bonded: C50/C65, C52/C60, C59/C82, C73/C79, C78/C103, and C91/C110. Positions 95–97 match the Cell attachment site motif; that stretch reads RGD.

Belongs to the venom metalloproteinase (M12B) family. P-II subfamily. P-IIa sub-subfamily. Monomer. Requires Zn(2+) as cofactor. Expressed by the venom gland.

The protein resides in the secreted. Functionally, impairs hemostasis in the envenomed animal. Inhibits platelet aggregation and bone resorption. The chain is Zinc metalloproteinase/disintegrin from Gloydius halys (Chinese water mocassin).